Here is a 166-residue protein sequence, read N- to C-terminus: Immunity protein RhsIB (166 aa).

Its function is as follows. Immunity component of a toxin-immunity protein module, which functions as a cellular contact-dependent growth inhibition (CDI) system. Specifically inhibits its cognate toxin RhsB. Cell contact is necessary for growth inhibition. The protein is Immunity protein RhsIB (rhsIB) of Dickeya dadantii (strain 3937) (Erwinia chrysanthemi (strain 3937)).